The primary structure comprises 446 residues: Phosphoglucosamine mutase (446 aa).

Catalysis depends on Ser101, which acts as the Phosphoserine intermediate. Ser101, Asp240, Asp242, and Asp244 together coordinate Mg(2+). Ser101 is modified (phosphoserine).

This sequence belongs to the phosphohexose mutase family. Mg(2+) serves as cofactor. Activated by phosphorylation.

The enzyme catalyses alpha-D-glucosamine 1-phosphate = D-glucosamine 6-phosphate. Functionally, catalyzes the conversion of glucosamine-6-phosphate to glucosamine-1-phosphate. The protein is Phosphoglucosamine mutase of Coxiella burnetii (strain Dugway 5J108-111).